Consider the following 174-residue polypeptide: MNHDKSPIILIGFMGTGKSTIGKYVADEQNLSFIDIDSYIEEKYKLTIPEIFSKHGEQYFRNLEFTCLQECINTADIIATGGGIIESEEAFNFLKNQKNIIWLDCNIDIIYSRINDDPHRPNANNKTIKQLNDLYCSRNLRYNEIAFKKFDSHLLSISEIYYELLNLIKASDQY.

Residue 15-20 (GTGKST) coordinates ATP. Residue Ser19 coordinates Mg(2+). Substrate is bound by residues Asp37, Arg61, and Gly82. Residue Arg120 coordinates ATP. Position 138 (Arg138) interacts with substrate.

Belongs to the shikimate kinase family. As to quaternary structure, monomer. The cofactor is Mg(2+).

It localises to the cytoplasm. The enzyme catalyses shikimate + ATP = 3-phosphoshikimate + ADP + H(+). It participates in metabolic intermediate biosynthesis; chorismate biosynthesis; chorismate from D-erythrose 4-phosphate and phosphoenolpyruvate: step 5/7. In terms of biological role, catalyzes the specific phosphorylation of the 3-hydroxyl group of shikimic acid using ATP as a cosubstrate. The chain is Shikimate kinase from Staphylococcus aureus (strain MSSA476).